The following is a 506-amino-acid chain: Maturase K (506 aa).

The protein belongs to the intron maturase 2 family. MatK subfamily.

The protein localises to the plastid. It is found in the chloroplast. Usually encoded in the trnK tRNA gene intron. Probably assists in splicing its own and other chloroplast group II introns. The sequence is that of Maturase K from Sullivantia sullivantii (Sullivant's coolwort).